The chain runs to 148 residues: Ribonuclease H (148 aa).

Residues 1–141 (MKTVEIYTDG…ADELANLGVK (141 aa)) form the RNase H type-1 domain. Mg(2+)-binding residues include Asp9, Glu47, Asp69, and Asp133.

Belongs to the RNase H family. In terms of assembly, monomer. The cofactor is Mg(2+).

It localises to the cytoplasm. It catalyses the reaction Endonucleolytic cleavage to 5'-phosphomonoester.. Endonuclease that specifically degrades the RNA of RNA-DNA hybrids. The chain is Ribonuclease H from Hahella chejuensis (strain KCTC 2396).